Here is a 491-residue protein sequence, read N- to C-terminus: Zinc finger protein 655 (491 aa).

A disordered region spans residues M1–E52. Residues V15–C26 show a composition bias toward polar residues. Phosphoserine is present on Q60. Residues K77, K190, and K201 each participate in a glycyl lysine isopeptide (Lys-Gly) (interchain with G-Cter in SUMO2) cross-link. C2H2-type zinc fingers lie at residues Y212 to H234, Y240 to H262, Y303 to H325, C330 to H353, Y380 to H402, and H408 to H430.

This sequence belongs to the krueppel C2H2-type zinc-finger protein family. As to quaternary structure, interacts with VAV1 and CDK4. Interacts with INTS13; promoting association with the integrator complex.

The protein localises to the nucleus. Its function is as follows. Probable transcription factor. The sequence is that of Zinc finger protein 655 from Homo sapiens (Human).